Consider the following 37-residue polypeptide: U1-theraphotoxin-Hs1b (37 aa).

3 disulfide bridges follow: Cys-4-Cys-18, Cys-8-Cys-29, and Cys-23-Cys-34.

Form 1 and form 2 may dimerize. As to expression, expressed by the venom gland.

It is found in the secreted. Its function is as follows. Lethal neurotoxin that blocks neuromuscular transmission. Acts cooperatively to potentiate the activity of huwentoxin-I. In Cyriopagopus schmidti (Chinese bird spider), this protein is U1-theraphotoxin-Hs1b.